The chain runs to 333 residues: Foldase protein PrsA (333 aa).

The N-terminal stretch at 1–22 (MKKSTKLLAGIVTLASAMTLAA) is a signal peptide. Cysteine 23 is lipidated: N-palmitoyl cysteine. Cysteine 23 is lipidated: S-diacylglycerol cysteine. The PpiC domain occupies 145 to 240 (TPEMTTQVIT…NKFYIVKVTK (96 aa)). The segment at 301 to 333 (DKKASKANTSKSDQKTSSDSSKDSQSSKSKSEK) is disordered. Over residues 312–322 (SDQKTSSDSSK) the composition is skewed to basic and acidic residues. Over residues 323 to 333 (DSQSSKSKSEK) the composition is skewed to low complexity.

Belongs to the PrsA family.

It localises to the cell membrane. The enzyme catalyses [protein]-peptidylproline (omega=180) = [protein]-peptidylproline (omega=0). Functionally, plays a major role in protein secretion by helping the post-translocational extracellular folding of several secreted proteins. In Streptococcus equi subsp. zooepidemicus (strain H70), this protein is Foldase protein PrsA.